A 107-amino-acid chain; its full sequence is Large ribosomal subunit protein uL24 (107 aa).

Belongs to the universal ribosomal protein uL24 family. As to quaternary structure, part of the 50S ribosomal subunit.

Functionally, one of two assembly initiator proteins, it binds directly to the 5'-end of the 23S rRNA, where it nucleates assembly of the 50S subunit. In terms of biological role, one of the proteins that surrounds the polypeptide exit tunnel on the outside of the subunit. The polypeptide is Large ribosomal subunit protein uL24 (Solidesulfovibrio magneticus (strain ATCC 700980 / DSM 13731 / RS-1) (Desulfovibrio magneticus)).